Reading from the N-terminus, the 542-residue chain is CTP synthase (542 aa).

An amidoligase domain region spans residues methionine 1–leucine 266. Serine 14 is a CTP binding site. Serine 14 lines the UTP pocket. Residues serine 15–isoleucine 20 and aspartate 72 each bind ATP. Positions 72 and 140 each coordinate Mg(2+). CTP is bound by residues aspartate 147–glutamate 149, lysine 187–glutamine 192, and lysine 223. Residues lysine 187–glutamine 192 and lysine 223 contribute to the UTP site. Residue lysine 239–valine 241 participates in ATP binding. A Glutamine amidotransferase type-1 domain is found at threonine 291 to lysine 542. Glycine 352 is a binding site for L-glutamine. Cysteine 379 serves as the catalytic Nucleophile; for glutamine hydrolysis. Residues leucine 380–glutamine 383, glutamate 403, and arginine 470 contribute to the L-glutamine site. Active-site residues include histidine 515 and glutamate 517.

The protein belongs to the CTP synthase family. As to quaternary structure, homotetramer.

It carries out the reaction UTP + L-glutamine + ATP + H2O = CTP + L-glutamate + ADP + phosphate + 2 H(+). The catalysed reaction is L-glutamine + H2O = L-glutamate + NH4(+). The enzyme catalyses UTP + NH4(+) + ATP = CTP + ADP + phosphate + 2 H(+). It functions in the pathway pyrimidine metabolism; CTP biosynthesis via de novo pathway; CTP from UDP: step 2/2. Allosterically activated by GTP, when glutamine is the substrate; GTP has no effect on the reaction when ammonia is the substrate. The allosteric effector GTP functions by stabilizing the protein conformation that binds the tetrahedral intermediate(s) formed during glutamine hydrolysis. Inhibited by the product CTP, via allosteric rather than competitive inhibition. Functionally, catalyzes the ATP-dependent amination of UTP to CTP with either L-glutamine or ammonia as the source of nitrogen. Regulates intracellular CTP levels through interactions with the four ribonucleotide triphosphates. The sequence is that of CTP synthase from Mannheimia succiniciproducens (strain KCTC 0769BP / MBEL55E).